A 114-amino-acid chain; its full sequence is Cytochrome c oxidase subunit 7A2-like, mitochondrial (114 aa).

The N-terminal 55 residues, 1-55 (MYYKFSGFTQKLAGAWASEAYSPQGLKPVVSTEAPPIIFATPTKLTSDSTVYDYA), are a transit peptide targeting the mitochondrion. The residue at position 69 (K69) is an N6-acetyllysine. Residues 82–107 (PDQMLYRTTMALTVGGTIYCLIALYM) traverse the membrane as a helical segment.

It belongs to the cytochrome c oxidase VIIa family. In terms of assembly, interacts with the mitochondrial respiratory complexes III (CIII) and IV (CIV), promoting their association.

It is found in the mitochondrion inner membrane. In terms of biological role, assembly factor that mediates the formation of some mitochondrial respiratory supercomplexes (respirasomes), thereby promoting oxidative phosphorylation and energy metabolism. Acts as a molecular adapter that associates with both mitochondrial respiratory complexes III (CIII) and IV (CIV), promoting their association. Mediates the formation of various mitochondrial respiratory supercomplexes, such as MCIII(2)IV(2), composed of two CIII and two CIV, and the CS-respirasome (MCI(1)III(2)IV(2)), composed of one CI, two CIII and two CIV. Not involved in the formation of the canonical respirasome (MCI(1)III(2)IV(1)), composed of one CI, two CIII and one CIV. The formation of different respirasomes is important for cell adaptation to oxygen conditions and prevent metabolic exhaustion: supercomplexes mediated by COX7A2L/SCAF1 are required to maintain oxidative phosphorylation upon low oxygen conditions and promote metabolic rewiring toward glycolysis. This is Cytochrome c oxidase subunit 7A2-like, mitochondrial from Homo sapiens (Human).